The following is a 1207-amino-acid chain: Brassinosteroid LRR receptor kinase (1207 aa).

The N-terminal stretch at 1–34 (MKAHKTVFNQHPLSLNKLFFVLLLIFFLPPASPA) is a signal peptide. The short motif at 71-78 (CSFTGVSC) is the Cys pair 1 element. 20 LRR repeats span residues 109-131 (NLESLVLKNANLSGSLTSAAKSQ), 135-157 (TLDSIDLAENTISGPISDISSFG), 161-181 (NLKSLNLSKNFLDPPGKEMLK), 186-207 (SLQVLDLSYNNISGFNLFPWVS), 213-234 (ELEFFSLKGNKLAGSIPELDFK), 235-257 (NLSYLDLSANNFSTVFPSFKDCS), 258-280 (NLQHLDLSSNKFYGDIGSSLSSC), 282-304 (KLSFLNLTNNQFVGLVPKLPSES), 305-325 (LQYLYLRGNDFQGVYPNQLAD), 329-350 (TVVELDLSYNNFSGMVPESLGE), 353-374 (SLELVDISYNNFSGKLPVDTLS), 378-400 (NIKTMVLSFNKFVGGLPDSFSNL), 402-423 (KLETLDMSSNNLTGVIPSGICK), 428-450 (NLKVLYLQNNLFKGPIPDSLSNC), 452-474 (QLVSLDLSFNYLTGSIPSSLGSL), 476-499 (KLKDLILWLNQLSGEIPQELMYLQ), 500-523 (ALENLILDFNDLTGPIPASLSNCT), 524-547 (KLNWISLSNNQLSGEIPASLGRLS), 548-570 (NLAILKLGNNSISGNIPAELGNC), and 572-594 (SLIWLDLNTNFLNGSIPPPLFKQ). N-linked (GlcNAc...) asparagine glycosylation is present at Asn119. Residues Asn166 and Asn196 are each glycosylated (N-linked (GlcNAc...) asparagine). N-linked (GlcNAc...) asparagine glycosylation is found at Asn235 and Asn245. Asn287 is a glycosylation site (N-linked (GlcNAc...) asparagine). 2 N-linked (GlcNAc...) asparagine glycosylation sites follow: Asn339 and Asn363. N-linked (GlcNAc...) asparagine glycosylation is found at Asn412 and Asn449. A glycan (N-linked (GlcNAc...) asparagine) is linked at Asn521. N-linked (GlcNAc...) asparagine glycans are attached at residues Asn556, Asn584, Asn646, and Asn662. LRR repeat units follow at residues 664–686 (SMIFLDLSYNKLEGSIPKELGAM), 688–711 (YLSILNLGHNDLSGMIPQQLGGLK), 712–735 (NVAILDLSYNRFNGTIPNSLTSLT), and 736–758 (LLGEIDLSNNNLSGMIPESAPFD). N-linked (GlcNAc...) asparagine glycosylation is found at Asn724, Asn746, and Asn767. The short motif at 771–779 (CGYPLPIPC) is the Cys pair 2 element. A helical transmembrane segment spans residues 803 to 823 (SVAMGLLFSLFCIFGLIIVAI). Positions 888 to 1163 (FHNDSLVGSG…IQVMAMFKEI (276 aa)) constitute a Protein kinase domain. Residues 894–902 (VGSGGFGDV) and Lys916 each bind ATP. Asp1014 functions as the Proton acceptor in the catalytic mechanism.

It belongs to the protein kinase superfamily. Ser/Thr protein kinase family.

The protein localises to the cell membrane. It carries out the reaction L-seryl-[protein] + ATP = O-phospho-L-seryl-[protein] + ADP + H(+). It catalyses the reaction L-threonyl-[protein] + ATP = O-phospho-L-threonyl-[protein] + ADP + H(+). In terms of biological role, receptor with a serine/threonine-protein kinase activity. Regulates, in response to brassinosteroid binding, a signaling cascade involved in plant development, including expression of light- and stress-regulated genes, promotion of cell elongation, normal leaf and chloroplast senescence, and flowering. May be involved in a feedback regulation of brassinosteroid biosynthesis. May be also involved in the perception of systemin, a peptide hormone responsible for the systemic activation of defense genes in leaves of wounded plants. The polypeptide is Brassinosteroid LRR receptor kinase (CURL3) (Solanum lycopersicum (Tomato)).